The sequence spans 177 residues: Large ribosomal subunit protein uL6 (177 aa).

This sequence belongs to the universal ribosomal protein uL6 family. As to quaternary structure, part of the 50S ribosomal subunit.

Functionally, this protein binds to the 23S rRNA, and is important in its secondary structure. It is located near the subunit interface in the base of the L7/L12 stalk, and near the tRNA binding site of the peptidyltransferase center. The protein is Large ribosomal subunit protein uL6 of Vibrio campbellii (strain ATCC BAA-1116).